The following is a 336-amino-acid chain: Aspartate carbamoyltransferase catalytic subunit (336 aa).

Carbamoyl phosphate is bound by residues Arg71 and Thr72. L-aspartate is bound at residue Lys99. Arg121, His151, and Gln154 together coordinate carbamoyl phosphate. Residues Arg184 and Arg239 each contribute to the L-aspartate site. Residues Gly280 and Pro281 each contribute to the carbamoyl phosphate site.

Belongs to the aspartate/ornithine carbamoyltransferase superfamily. ATCase family. In terms of assembly, heterododecamer (2C3:3R2) of six catalytic PyrB chains organized as two trimers (C3), and six regulatory PyrI chains organized as three dimers (R2).

The catalysed reaction is carbamoyl phosphate + L-aspartate = N-carbamoyl-L-aspartate + phosphate + H(+). It participates in pyrimidine metabolism; UMP biosynthesis via de novo pathway; (S)-dihydroorotate from bicarbonate: step 2/3. Its function is as follows. Catalyzes the condensation of carbamoyl phosphate and aspartate to form carbamoyl aspartate and inorganic phosphate, the committed step in the de novo pyrimidine nucleotide biosynthesis pathway. The protein is Aspartate carbamoyltransferase catalytic subunit of Azotobacter vinelandii (strain DJ / ATCC BAA-1303).